The sequence spans 89 residues: Small ribosomal subunit protein uS15 (89 aa).

Belongs to the universal ribosomal protein uS15 family. As to quaternary structure, part of the 30S ribosomal subunit. Forms a bridge to the 50S subunit in the 70S ribosome, contacting the 23S rRNA.

Functionally, one of the primary rRNA binding proteins, it binds directly to 16S rRNA where it helps nucleate assembly of the platform of the 30S subunit by binding and bridging several RNA helices of the 16S rRNA. In terms of biological role, forms an intersubunit bridge (bridge B4) with the 23S rRNA of the 50S subunit in the ribosome. The sequence is that of Small ribosomal subunit protein uS15 from Bartonella bacilliformis (strain ATCC 35685 / KC583 / Herrer 020/F12,63).